A 676-amino-acid polypeptide reads, in one-letter code: Urocanate hydratase (676 aa).

The disordered stretch occupies residues 15-35 (PLPENRGRQAGVPHAPVRTPS). Residues 126–127 (GG), Gln204, 251–253 (GMS), Glu271, 317–318 (NV), 343–347 (QTSCH), 354–355 (YY), Tyr403, and Gly594 contribute to the NAD(+) site.

It belongs to the urocanase family. The cofactor is NAD(+).

The catalysed reaction is 4-imidazolone-5-propanoate = trans-urocanate + H2O. It participates in amino-acid degradation; L-histidine degradation into L-glutamate; N-formimidoyl-L-glutamate from L-histidine: step 2/3. This is Urocanate hydratase (UROC1) from Homo sapiens (Human).